A 102-amino-acid chain; its full sequence is UPF0251 protein ASA_1331 (102 aa).

The protein belongs to the UPF0251 family.

The protein is UPF0251 protein ASA_1331 of Aeromonas salmonicida (strain A449).